The sequence spans 180 residues: Nucleoside triphosphate/diphosphate phosphatase (180 aa).

Arg26 acts as the Proton donor in catalysis. Mg(2+) contacts are provided by Asn90, Asp106, Asp108, Asp110, Asp123, and Glu126.

It belongs to the Ntdp family. The cofactor is Mg(2+).

The catalysed reaction is a ribonucleoside 5'-triphosphate + H2O = a ribonucleoside 5'-diphosphate + phosphate + H(+). It catalyses the reaction a ribonucleoside 5'-diphosphate + H2O = a ribonucleoside 5'-phosphate + phosphate + H(+). Functionally, has nucleoside phosphatase activity towards nucleoside triphosphates and nucleoside diphosphates. In Staphylococcus aureus (strain MRSA252), this protein is Nucleoside triphosphate/diphosphate phosphatase.